An 873-amino-acid polypeptide reads, in one-letter code: Chitin synthase F (873 aa).

Residues 1 to 105 are disordered; it reads MEDAHDQSSR…KSGSGLRRYP (105 aa). Composition is skewed to polar residues over residues 33-46, 58-72, and 80-98; these read SYPSNENEDVSQSL, ISSQWPPGTIQQNPS, and ESEVASQTSWQRRQTTKSG. N-linked (GlcNAc...) asparagine glycosylation occurs at Asn-506. The next 7 membrane-spanning stretches (helical) occupy residues 532–554, 588–608, 621–641, 672–692, 702–722, 802–822, and 841–861; these read LVFLHVQLVYNICQLTMTWFSLA, IVNNIIKALYLAFLMQQFFLA, ILTFLYFAIVQLYILILSFYL, GLVLIALVSTYGTYIIASILY, SWAYFLGMPLTINVLNVYAFC, LVLLWTLCNGLLALLINNDSV, and VILWATSGLSVFRFLGALWFL.

This sequence belongs to the chitin synthase family. Class III subfamily.

It is found in the cell membrane. The enzyme catalyses [(1-&gt;4)-N-acetyl-beta-D-glucosaminyl](n) + UDP-N-acetyl-alpha-D-glucosamine = [(1-&gt;4)-N-acetyl-beta-D-glucosaminyl](n+1) + UDP + H(+). Functionally, polymerizes chitin, a structural polymer of the cell wall and septum, by transferring the sugar moiety of UDP-GlcNAc to the non-reducing end of the growing chitin polymer. Plays an important role in septal growth or maintenance. Mediates colony spore formation. The chain is Chitin synthase F from Aspergillus niger (strain ATCC MYA-4892 / CBS 513.88 / FGSC A1513).